The primary structure comprises 354 residues: Protein RecA (354 aa).

Residue 67–74 participates in ATP binding; sequence GPESSGKT.

The protein belongs to the RecA family.

The protein resides in the cytoplasm. Its function is as follows. Can catalyze the hydrolysis of ATP in the presence of single-stranded DNA, the ATP-dependent uptake of single-stranded DNA by duplex DNA, and the ATP-dependent hybridization of homologous single-stranded DNAs. It interacts with LexA causing its activation and leading to its autocatalytic cleavage. The sequence is that of Protein RecA from Haemophilus influenzae (strain 86-028NP).